Consider the following 360-residue polypeptide: UDP-N-acetylglucosamine--N-acetylmuramyl-(pentapeptide) pyrophosphoryl-undecaprenol N-acetylglucosamine transferase (360 aa).

Positions 198 and 289 each coordinate UDP-N-acetyl-alpha-D-glucosamine.

The protein belongs to the glycosyltransferase 28 family. MurG subfamily.

Its subcellular location is the cell membrane. It carries out the reaction Mur2Ac(oyl-L-Ala-gamma-D-Glu-L-Lys-D-Ala-D-Ala)-di-trans,octa-cis-undecaprenyl diphosphate + UDP-N-acetyl-alpha-D-glucosamine = beta-D-GlcNAc-(1-&gt;4)-Mur2Ac(oyl-L-Ala-gamma-D-Glu-L-Lys-D-Ala-D-Ala)-di-trans,octa-cis-undecaprenyl diphosphate + UDP + H(+). Its pathway is cell wall biogenesis; peptidoglycan biosynthesis. Cell wall formation. Catalyzes the transfer of a GlcNAc subunit on undecaprenyl-pyrophosphoryl-MurNAc-pentapeptide (lipid intermediate I) to form undecaprenyl-pyrophosphoryl-MurNAc-(pentapeptide)GlcNAc (lipid intermediate II). This Streptococcus pyogenes serotype M3 (strain SSI-1) protein is UDP-N-acetylglucosamine--N-acetylmuramyl-(pentapeptide) pyrophosphoryl-undecaprenol N-acetylglucosamine transferase.